Consider the following 123-residue polypeptide: Mitochondrial zinc maintenance protein 1, mitochondrial (123 aa).

Residues 1-24 (MSTRTKALNAYRHGLRATRIAFRN) constitute a mitochondrion transit peptide.

Belongs to the complex I LYR family. MZM1 subfamily. In terms of assembly, interacts with RIP1.

Its subcellular location is the mitochondrion matrix. Functionally, assembly factor required for Rieske Fe-S protein RIP1 incorporation into the cytochrome b-c1 (CIII) complex. Functions as a chaperone, binding to this subunit within the mitochondrial matrix and stabilizing it prior to its translocation and insertion into the late CIII dimeric intermediate within the mitochondrial inner membrane. Modulates the mitochondrial matrix zinc pool. This chain is Mitochondrial zinc maintenance protein 1, mitochondrial (MZM1), found in Saccharomyces cerevisiae (strain RM11-1a) (Baker's yeast).